A 292-amino-acid chain; its full sequence is uncharacterized protein (292 aa).

The first 19 residues, 1–19, serve as a signal peptide directing secretion; it reads MFKKYIFILLLLVTSIVKA. Residues 271–292 are disordered; it reads KRNNPPLKTNNAKSKNPYDQSK.

This is an uncharacterized protein from Rickettsia bellii (strain RML369-C).